The primary structure comprises 649 residues: Replication protein E1 (649 aa).

The short motif at 83–85 (KRK) is the Nuclear localization signal element. Serine 89, serine 93, and serine 107 each carry phosphoserine; by host. Positions 106-115 (ISPRLDAIKL) match the Nuclear export signal motif. Positions 146 to 188 (TQVEKHGDPENGGDGQERDTGRDIEGEGVEHREAEAVDDSTRE) are disordered. A compositionally biased stretch (basic and acidic residues) spans 148 to 188 (VEKHGDPENGGDGQERDTGRDIEGEGVEHREAEAVDDSTRE). A DNA-binding region region spans residues 187-353 (REHADTSGIL…QTVIEHSLAD (167 aa)). An SF3 helicase domain is found at 452 to 602 (IEFIPFLSKL…FPFDRNGNAV (151 aa)). ATP is bound at residue 478–485 (GPPDTGKS). Lysine 559 is covalently cross-linked (Glycyl lysine isopeptide (Lys-Gly) (interchain with G-Cter in SUMO)).

Belongs to the papillomaviridae E1 protein family. In terms of assembly, can form hexamers. Interacts with E2 protein; this interaction increases E1 DNA binding specificity. Interacts with host DNA polymerase subunit POLA2. Interacts with host single stranded DNA-binding protein RPA1. Interacts with host TOP1; this interaction stimulates the enzymatic activity of TOP1. Post-translationally, phosphorylated. Sumoylated.

It localises to the host nucleus. The enzyme catalyses Couples ATP hydrolysis with the unwinding of duplex DNA by translocating in the 3'-5' direction.. The catalysed reaction is ATP + H2O = ADP + phosphate + H(+). Functionally, ATP-dependent DNA 3'-5' helicase required for initiation of viral DNA replication. It forms a complex with the viral E2 protein. The E1-E2 complex binds to the replication origin which contains binding sites for both proteins. During the initial step, a dimer of E1 interacts with a dimer of protein E2 leading to a complex that binds the viral origin of replication with high specificity. Then, a second dimer of E1 displaces the E2 dimer in an ATP-dependent manner to form the E1 tetramer. Following this, two E1 monomers are added to each half of the site, which results in the formation of two E1 trimers on the viral ori. Subsequently, two hexamers will be created. The double hexamer acts as a bi-directional helicase machinery and unwinds the viral DNA and then recruits the host DNA polymerase to start replication. In Human papillomavirus 11, this protein is Replication protein E1.